The following is a 504-amino-acid chain: Terminase, large subunit (504 aa).

The ATPase activity stretch occupies residues 1-204 (MTRGERVIAF…LSIWIDDAVK (204 aa)). A Walker A motif motif is present at residues 54–61 (IARKNGKT). The short motif at 149–154 (LAILDE) is the Walker B motif element. Residues 326–415 (FPFFWTPQKT…LPLVEFGQGF (90 aa)) form a nuclease activity region. Residue D471 participates in Mg(2+) binding.

Belongs to the Hendrixvirinae large terminase family. In terms of assembly, homopentamer; forms a ring-like structure through which genomic DNA is translocated into the capsid. Interacts with the terminase small subunit; the active complex is composed of a pentamer ring of terminase large subunits and a nonamer ring of terminase small subunits. Interacts with the portal protein; this interaction allows the packaging of viral DNA. The cofactor is Mg(2+). Requires Mn(2+) as cofactor.

With respect to regulation, inhibited by zinc. The terminase large subunit acts as an ATP driven molecular motor necessary for viral DNA translocation into empty capsids and as an endonuclease that cuts the viral genome from the concetamer to initiate and to end a packaging reaction. The terminase lies at a unique vertex of the procapsid and is composed of two subunits, a small terminase subunit involved in viral DNA recognition (packaging sequence), and a large terminase subunit possessing endonucleolytic and ATPase activities. Both terminase subunits heterooligomerize and are docked on the portal protein to form the packaging machine. Packaging initiates by TerS recognizing the packaging sequence in the viral DNA. The nuclease activity of TerL cuts the viral DNA and the terminase-DNA complex binds to the portal of a procapsid shell. DNA is translocated into the capsid, powered by the packaging ATPase in TerL, which continues until the next site is encountered at which point the motor stops and again cuts the DNA to release the nucleocapsid filled with a unit-length genome ('unit length' packaging). In Escherichia coli (Bacteriophage HK97), this protein is Terminase, large subunit (2).